The following is a 746-amino-acid chain: NAD(P)H-quinone oxidoreductase subunit 5, chloroplastic (746 aa).

15 helical membrane passes run 9–29 (WIIP…LLLV), 40–60 (WTFP…NLSI), 89–109 (IDPL…MVLI), 122–139 (LRFF…LGLV), 147–167 (IYIF…FWFT), 185–205 (GDFG…SFEF), 219–239 (NGVN…GAVA), 258–278 (TPIS…FLVA), 280–300 (LLPL…IGVI), 327–347 (LGYI…FHLI), 396–416 (TTFL…CFWS), 425–445 (WLYS…TAFY), 546–566 (LLPL…GIPF), 605–625 (IYSV…YGSI), and 722–742 (YLFV…FYFF).

This sequence belongs to the complex I subunit 5 family. NDH is composed of at least 16 different subunits, 5 of which are encoded in the nucleus.

It is found in the plastid. The protein resides in the chloroplast thylakoid membrane. It carries out the reaction a plastoquinone + NADH + (n+1) H(+)(in) = a plastoquinol + NAD(+) + n H(+)(out). It catalyses the reaction a plastoquinone + NADPH + (n+1) H(+)(in) = a plastoquinol + NADP(+) + n H(+)(out). In terms of biological role, NDH shuttles electrons from NAD(P)H:plastoquinone, via FMN and iron-sulfur (Fe-S) centers, to quinones in the photosynthetic chain and possibly in a chloroplast respiratory chain. The immediate electron acceptor for the enzyme in this species is believed to be plastoquinone. Couples the redox reaction to proton translocation, and thus conserves the redox energy in a proton gradient. This is NAD(P)H-quinone oxidoreductase subunit 5, chloroplastic (ndhF) from Calycanthus floridus var. glaucus (Eastern sweetshrub).